The sequence spans 284 residues: Nucleotide-binding protein CPS_4546 (284 aa).

Residue 8 to 15 (GRSGSGKS) participates in ATP binding. 56-59 (DVRN) serves as a coordination point for GTP.

Belongs to the RapZ-like family.

In terms of biological role, displays ATPase and GTPase activities. The chain is Nucleotide-binding protein CPS_4546 from Colwellia psychrerythraea (strain 34H / ATCC BAA-681) (Vibrio psychroerythus).